A 286-amino-acid chain; its full sequence is Bifunctional protein FolD (286 aa).

Position 166–168 (166–168 (GAS)) interacts with NADP(+).

Belongs to the tetrahydrofolate dehydrogenase/cyclohydrolase family. As to quaternary structure, homodimer.

It carries out the reaction (6R)-5,10-methylene-5,6,7,8-tetrahydrofolate + NADP(+) = (6R)-5,10-methenyltetrahydrofolate + NADPH. It catalyses the reaction (6R)-5,10-methenyltetrahydrofolate + H2O = (6R)-10-formyltetrahydrofolate + H(+). Its pathway is one-carbon metabolism; tetrahydrofolate interconversion. Its function is as follows. Catalyzes the oxidation of 5,10-methylenetetrahydrofolate to 5,10-methenyltetrahydrofolate and then the hydrolysis of 5,10-methenyltetrahydrofolate to 10-formyltetrahydrofolate. This Idiomarina loihiensis (strain ATCC BAA-735 / DSM 15497 / L2-TR) protein is Bifunctional protein FolD.